The following is a 174-amino-acid chain: Ribosomal RNA large subunit methyltransferase H (174 aa).

Residues Leu90, Gly122, and 141–146 each bind S-adenosyl-L-methionine; that span reads LGELTW.

This sequence belongs to the RNA methyltransferase RlmH family. In terms of assembly, homodimer.

It is found in the cytoplasm. It carries out the reaction pseudouridine(1915) in 23S rRNA + S-adenosyl-L-methionine = N(3)-methylpseudouridine(1915) in 23S rRNA + S-adenosyl-L-homocysteine + H(+). Functionally, specifically methylates the pseudouridine at position 1915 (m3Psi1915) in 23S rRNA. This is Ribosomal RNA large subunit methyltransferase H from Brucella melitensis biotype 2 (strain ATCC 23457).